Reading from the N-terminus, the 140-residue chain is Organic hydroperoxide resistance protein-like (140 aa).

This sequence belongs to the OsmC/Ohr family.

This is Organic hydroperoxide resistance protein-like from Mycoplasma pneumoniae (strain ATCC 29342 / M129 / Subtype 1) (Mycoplasmoides pneumoniae).